Consider the following 836-residue polypeptide: Ethylene receptor 3 (836 aa).

Transmembrane regions (helical) follow at residues 137-157, 166-186, and 204-224; these read LIAA…AGLR, LVQF…TAFT, and LTAL…PQLL. Cu cation contacts are provided by C176 and H180. In terms of domain architecture, GAF spans 269-413; sequence DRHTVLYTTL…VVAGQVAVAL (145 aa). A coiled-coil region spans residues 416 to 452; it reads ATLLEESRAMRDRLAEQNRELLQARRDALMANEARQA. One can recognise a Histidine kinase domain in the interval 457 to 691; sequence MSQGMRRPIH…LVLRFQLQSP (235 aa). One can recognise a Response regulatory domain in the interval 718-834; it reads LLIDDDDDIN…LKDELARILQ (117 aa).

The protein belongs to the ethylene receptor family. It depends on Cu cation as a cofactor.

The protein localises to the endoplasmic reticulum membrane. The enzyme catalyses ATP + protein L-histidine = ADP + protein N-phospho-L-histidine.. Functionally, ethylene receptor related to bacterial two-component regulators. Acts as a negative regulator of ethylene signaling. May delay the transition from the vegetative stage to the floral stage by up-regulating GI (GIGANTEA) and RCN1 and cause starch accumulation in stems by down-regulating the alpha-amylase AMY3D. This is Ethylene receptor 3 (ETR3) from Oryza sativa subsp. japonica (Rice).